The sequence spans 83 residues: U5-theraphotoxin-Hs1b 2 (83 aa).

A signal peptide spans 1-21 (MQTSMFLTLTGLVLLFVVCYA). The propeptide occupies 22–49 (SESEEKEFPKELLSSIFAADSDFKEEER). Intrachain disulfides connect C51–C63, C56–C68, and C62–C75.

The protein belongs to the neurotoxin 10 (Hwtx-1) family. 51 (Hntx-8) subfamily. Hntx-8 sub-subfamily. Expressed by the venom gland.

The protein localises to the secreted. In terms of biological role, agglutinates erythrocytes. The chain is U5-theraphotoxin-Hs1b 2 from Cyriopagopus schmidti (Chinese bird spider).